A 251-amino-acid polypeptide reads, in one-letter code: Aliphatic sulfonates import ATP-binding protein SsuB (251 aa).

Positions 3–231 (VSINEVSKYF…PRSKNSESFQ (229 aa)) constitute an ABC transporter domain. Position 39–46 (39–46 (GPSGCGKS)) interacts with ATP.

The protein belongs to the ABC transporter superfamily. Aliphatic sulfonates importer (TC 3.A.1.17.2) family. As to quaternary structure, the complex is composed of two ATP-binding proteins (SsuB), two transmembrane proteins (SsuC) and a solute-binding protein (SsuA).

The protein resides in the cell membrane. The catalysed reaction is ATP + H2O + aliphatic sulfonate-[sulfonate-binding protein]Side 1 = ADP + phosphate + aliphatic sulfonateSide 2 + [sulfonate-binding protein]Side 1.. Part of the ABC transporter complex SsuABC involved in aliphatic sulfonates import. Responsible for energy coupling to the transport system. This chain is Aliphatic sulfonates import ATP-binding protein SsuB, found in Bacillus cereus (strain ZK / E33L).